A 359-amino-acid chain; its full sequence is Transcription elongation factor A N-terminal and central domain-containing protein (359 aa).

The 82-residue stretch at 1–82 folds into the TFIIS N-terminal domain; the sequence is MSDKNQIIAR…AKWRGFYKST (82 aa). The segment at 84–118 is disordered; the sequence is CKPRQSPKVLHTNANKEESAAVSQDVSQDETSGSS. Polar residues predominate over residues 104–118; it reads AVSQDVSQDETSGSS. The TFIIS central domain maps to 182–298; sequence VRSKCVELLY…EHCLPQSVDG (117 aa).

This chain is Transcription elongation factor A N-terminal and central domain-containing protein (Tceanc), found in Mus musculus (Mouse).